A 362-amino-acid polypeptide reads, in one-letter code: Biotin synthase (362 aa).

One can recognise a Radical SAM core domain in the interval 46–273; it reads NEVQVSTLLS…ASHVRLSAGR (228 aa). Residues C61, C65, and C68 each coordinate [4Fe-4S] cluster. [2Fe-2S] cluster contacts are provided by C105, C136, C196, and R268. Residues 320-339 form a disordered region; that stretch reads PAQRAQKPDQVQEEELLAEV.

The protein belongs to the radical SAM superfamily. Biotin synthase family. In terms of assembly, homodimer. The cofactor is [4Fe-4S] cluster. Requires [2Fe-2S] cluster as cofactor.

The enzyme catalyses (4R,5S)-dethiobiotin + (sulfur carrier)-SH + 2 reduced [2Fe-2S]-[ferredoxin] + 2 S-adenosyl-L-methionine = (sulfur carrier)-H + biotin + 2 5'-deoxyadenosine + 2 L-methionine + 2 oxidized [2Fe-2S]-[ferredoxin]. Its pathway is cofactor biosynthesis; biotin biosynthesis; biotin from 7,8-diaminononanoate: step 2/2. In terms of biological role, catalyzes the conversion of dethiobiotin (DTB) to biotin by the insertion of a sulfur atom into dethiobiotin via a radical-based mechanism. This Aeromonas hydrophila subsp. hydrophila (strain ATCC 7966 / DSM 30187 / BCRC 13018 / CCUG 14551 / JCM 1027 / KCTC 2358 / NCIMB 9240 / NCTC 8049) protein is Biotin synthase.